We begin with the raw amino-acid sequence, 194 residues long: Crossover junction endodeoxyribonuclease RuvC (194 aa).

Active-site residues include Asp7, Glu68, and Asp141. Mg(2+) contacts are provided by Asp7, Glu68, and Asp141. The segment at 162 to 194 is disordered; it reads GGEREQHLTAAQRQWAEAAQNSTRRRKNSDRGM. The segment covering 184-194 has biased composition (basic residues); sequence TRRRKNSDRGM.

It belongs to the RuvC family. As to quaternary structure, homodimer which binds Holliday junction (HJ) DNA. The HJ becomes 2-fold symmetrical on binding to RuvC with unstacked arms; it has a different conformation from HJ DNA in complex with RuvA. In the full resolvosome a probable DNA-RuvA(4)-RuvB(12)-RuvC(2) complex forms which resolves the HJ. It depends on Mg(2+) as a cofactor.

It localises to the cytoplasm. It carries out the reaction Endonucleolytic cleavage at a junction such as a reciprocal single-stranded crossover between two homologous DNA duplexes (Holliday junction).. The RuvA-RuvB-RuvC complex processes Holliday junction (HJ) DNA during genetic recombination and DNA repair. Endonuclease that resolves HJ intermediates. Cleaves cruciform DNA by making single-stranded nicks across the HJ at symmetrical positions within the homologous arms, yielding a 5'-phosphate and a 3'-hydroxyl group; requires a central core of homology in the junction. The consensus cleavage sequence is 5'-(A/T)TT(C/G)-3'. Cleavage occurs on the 3'-side of the TT dinucleotide at the point of strand exchange. HJ branch migration catalyzed by RuvA-RuvB allows RuvC to scan DNA until it finds its consensus sequence, where it cleaves and resolves the cruciform DNA. This Bifidobacterium longum subsp. infantis (strain ATCC 15697 / DSM 20088 / JCM 1222 / NCTC 11817 / S12) protein is Crossover junction endodeoxyribonuclease RuvC.